Consider the following 275-residue polypeptide: Large ribosomal subunit protein uL2 (275 aa).

The disordered stretch occupies residues 223–275; sequence VAMNPVDHPHGGGEGRTSGGRHPVSPWGQPTKGYKTRSNKRTDKYIVRRRNKK.

Belongs to the universal ribosomal protein uL2 family. Part of the 50S ribosomal subunit. Forms a bridge to the 30S subunit in the 70S ribosome.

One of the primary rRNA binding proteins. Required for association of the 30S and 50S subunits to form the 70S ribosome, for tRNA binding and peptide bond formation. It has been suggested to have peptidyltransferase activity; this is somewhat controversial. Makes several contacts with the 16S rRNA in the 70S ribosome. In Shewanella halifaxensis (strain HAW-EB4), this protein is Large ribosomal subunit protein uL2.